We begin with the raw amino-acid sequence, 674 residues long: Zinc finger protein 750 (674 aa).

The segment at 25–51 (YKCFQCPFTCNEKSHLFNHMKYGLCKN) adopts a CCHC-type zinc-finger fold. Residues Cys27, Cys30, His43, and Cys49 each contribute to the Zn(2+) site. Disordered regions lie at residues 105–125 (EAKE…KTTV), 370–466 (LAKN…QSHS), and 594–674 (TSSP…PRVS). Polar residues-rich tracts occupy residues 401-411 (SPTNFTQSSQG) and 444-466 (DSQT…QSHS).

The protein localises to the nucleus. Its function is as follows. Transcription factor involved in epidermis differentiation. The chain is Zinc finger protein 750 (znf750) from Xenopus laevis (African clawed frog).